Reading from the N-terminus, the 313-residue chain is MSKVTVVGAGNVGATCANVLAFNEVADEVVMLDVKEGVSEGKAMDMMQTAQLLGFDTTVVGCTNDYAQTANSDVVVITSGIPRKPGMTREELIGVNAGIVKSVAENILKYSPNAILVVISNPMDTMTYLSLKALGLPKNRIIGMGGALDSSRFKYFLSQALGCNANEVEGMVIGGHGDTTMIPLTRFATYKGMPVTNFISEEKLNEVAAATMVGGATLTKLLGTSAWYAPGAAGAFVVESILHDQKKMIPCSVYLEGEYGESDICIGVPVILGKNGIEKIVELDLNADEKAKFAASAKAVHGTNAALKEVGAL.

Residues 8–13 and Asp33 each bind NAD(+); that span reads GAGNVG. Residues Arg83 and Arg89 each coordinate substrate. Residues Asn96 and 119–121 contribute to the NAD(+) site; that span reads ISN. Residues Asn121 and Arg152 each contribute to the substrate site. His176 functions as the Proton acceptor in the catalytic mechanism.

It belongs to the LDH/MDH superfamily. MDH type 3 family.

It carries out the reaction (S)-malate + NAD(+) = oxaloacetate + NADH + H(+). Functionally, catalyzes the reversible oxidation of malate to oxaloacetate. This is Malate dehydrogenase from Bacteroides thetaiotaomicron (strain ATCC 29148 / DSM 2079 / JCM 5827 / CCUG 10774 / NCTC 10582 / VPI-5482 / E50).